The chain runs to 164 residues: Ribosome maturation factor RimP (164 aa).

Belongs to the RimP family.

Its subcellular location is the cytoplasm. Required for maturation of 30S ribosomal subunits. The protein is Ribosome maturation factor RimP of Mesoplasma florum (strain ATCC 33453 / NBRC 100688 / NCTC 11704 / L1) (Acholeplasma florum).